The chain runs to 401 residues: Proline-rich protein 30 (401 aa).

Positions 69 to 80 (PGPHFSSDSNSD) are enriched in polar residues. Disordered regions lie at residues 69 to 93 (PGPH…PRSS), 129 to 191 (SSSL…RGAG), and 357 to 401 (QSPK…KSPS). Low complexity-rich tracts occupy residues 83 to 93 (PPHSSSHPRSS) and 129 to 147 (SSSL…QSPS). Polar residues-rich tracts occupy residues 148 to 186 (RLQD…SIKS) and 357 to 368 (QSPKPSQCSRSL).

This chain is Proline-rich protein 30 (Prr30), found in Mus musculus (Mouse).